The primary structure comprises 326 residues: Phospho-N-acetylmuramoyl-pentapeptide-transferase (326 aa).

10 consecutive transmembrane segments (helical) span residues 3–23 (LPTK…PYFI), 51–71 (TPTM…LFWV), 77–97 (ILLL…DDYL), 113–133 (ILIQ…YFTE), 143–163 (GIMI…VVGS), 175–195 (GLAA…AYMT), 199–219 (ISVI…LWFN), 225–245 (IFMG…TSVL), 250–270 (VLFA…VIQV), and 306–326 (IVIK…AFLL).

It belongs to the glycosyltransferase 4 family. MraY subfamily. Mg(2+) serves as cofactor.

The protein localises to the cell membrane. It catalyses the reaction UDP-N-acetyl-alpha-D-muramoyl-L-alanyl-gamma-D-glutamyl-meso-2,6-diaminopimeloyl-D-alanyl-D-alanine + di-trans,octa-cis-undecaprenyl phosphate = di-trans,octa-cis-undecaprenyl diphospho-N-acetyl-alpha-D-muramoyl-L-alanyl-D-glutamyl-meso-2,6-diaminopimeloyl-D-alanyl-D-alanine + UMP. It participates in cell wall biogenesis; peptidoglycan biosynthesis. Its function is as follows. Catalyzes the initial step of the lipid cycle reactions in the biosynthesis of the cell wall peptidoglycan: transfers peptidoglycan precursor phospho-MurNAc-pentapeptide from UDP-MurNAc-pentapeptide onto the lipid carrier undecaprenyl phosphate, yielding undecaprenyl-pyrophosphoryl-MurNAc-pentapeptide, known as lipid I. The polypeptide is Phospho-N-acetylmuramoyl-pentapeptide-transferase (Wolbachia sp. subsp. Brugia malayi (strain TRS)).